A 236-amino-acid polypeptide reads, in one-letter code: MITLPARPESLTFAPQQSALIVVDMQNAYASQGGYLDLAGFDVSATRPVIDNINTAVAAARAAGMLIIWFQNGWDDQYVEAGGPGSPNYHKSNALKTMRQRPELQGKLLAKGGWDYQLVDELTPQEGDIVLPKPRYSGFFNTPLDSILRSRGIRHLVFTGIATNVCVESTLRDGFFLEYFGIVLEDATHQAGPAFAQQAALFNIETFFGWVSDVESFCHALSPATPLSLAKEKRYA.

The active-site Proton acceptor is the Asp24. The active site involves Lys133. The Nucleophile role is filled by Cys166.

It belongs to the isochorismatase family. RutB subfamily.

The enzyme catalyses (Z)-3-ureidoacrylate + H2O + H(+) = (Z)-3-aminoacrylate + NH4(+) + CO2. It carries out the reaction (Z)-3-ureidoacrylate + H2O = (Z)-3-aminoacrylate + carbamate + H(+). It catalyses the reaction (Z)-2-methylureidoacrylate + H2O + H(+) = (Z)-2-methylaminoacrylate + NH4(+) + CO2. In terms of biological role, hydrolyzes ureidoacrylate to form aminoacrylate and carbamate. The carbamate hydrolyzes spontaneously, thereby releasing one of the nitrogen atoms of the pyrimidine ring as ammonia and one of its carbon atoms as CO2. In Klebsiella variicola (strain At-22), this protein is Ureidoacrylate amidohydrolase RutB.